The chain runs to 267 residues: Myeloid leukemia factor 1 (267 aa).

4 positions are modified to phosphoserine: Ser-6, Ser-8, Ser-32, and Ser-34. The disordered stretch occupies residues 39 to 67 (RDLLSISDGRGRTHNRRERDDGEDSLTHA). The tract at residues 50-125 (RTHNRRERDD…VGDEPPKVFQ (76 aa)) is interaction with COPS3.

This sequence belongs to the MLF family. In terms of assembly, interacts with CENPU. Also interacts with NRBP1/MADM, YWHAZ/14-3-3-zeta and HNRPUL2/MANP. NRBP1 recruits a serine kinase which phosphorylates both itself and MLF1. Phosphorylated MLF1 then binds to YWHAZ and is retained in the cytoplasm. Retained in the nucleus by binding to HNRPUL2. Binds to COPS3/CSN3 which is required for suppression of COP1 and activation of p53. Phosphorylation is required for binding to YWHAZ. As to expression, highly expressed in skeletal muscle, heart, testis. Also found in lung, but not in spleen, thymus, bone marrow, liver and kidney.

It localises to the cytoplasm. The protein localises to the nucleus. The protein resides in the cell projection. Its subcellular location is the cilium. It is found in the cytoskeleton. It localises to the cilium basal body. Involved in lineage commitment of primary hemopoietic progenitors by restricting erythroid formation and enhancing myeloid formation. Interferes with erythropoietin-induced erythroid terminal differentiation by preventing cells from exiting the cell cycle through suppression of CDKN1B/p27Kip1 levels. Suppresses COP1 activity via CSN3 which activates p53 and induces cell cycle arrest. Binds DNA and affects the expression of a number of genes so may function as a transcription factor in the nucleus. The sequence is that of Myeloid leukemia factor 1 (Mlf1) from Mus musculus (Mouse).